Reading from the N-terminus, the 210-residue chain is N-(5'-phosphoribosyl)anthranilate isomerase (210 aa).

It belongs to the TrpF family.

The catalysed reaction is N-(5-phospho-beta-D-ribosyl)anthranilate = 1-(2-carboxyphenylamino)-1-deoxy-D-ribulose 5-phosphate. It participates in amino-acid biosynthesis; L-tryptophan biosynthesis; L-tryptophan from chorismate: step 3/5. The chain is N-(5'-phosphoribosyl)anthranilate isomerase from Magnetococcus marinus (strain ATCC BAA-1437 / JCM 17883 / MC-1).